We begin with the raw amino-acid sequence, 293 residues long: Diaminopimelate epimerase (293 aa).

Substrate-binding residues include asparagine 17, glutamine 47, and asparagine 67. Cysteine 76 (proton donor) is an active-site residue. Residues 77–78 (GN), asparagine 164, asparagine 197, and 215–216 (ER) contribute to the substrate site. The Proton acceptor role is filled by cysteine 224. 225–226 (GS) is a binding site for substrate.

Belongs to the diaminopimelate epimerase family. As to quaternary structure, homodimer.

The protein localises to the cytoplasm. It catalyses the reaction (2S,6S)-2,6-diaminopimelate = meso-2,6-diaminopimelate. The protein operates within amino-acid biosynthesis; L-lysine biosynthesis via DAP pathway; DL-2,6-diaminopimelate from LL-2,6-diaminopimelate: step 1/1. Functionally, catalyzes the stereoinversion of LL-2,6-diaminopimelate (L,L-DAP) to meso-diaminopimelate (meso-DAP), a precursor of L-lysine and an essential component of the bacterial peptidoglycan. The polypeptide is Diaminopimelate epimerase (Rhodopseudomonas palustris (strain TIE-1)).